A 121-amino-acid polypeptide reads, in one-letter code: Large ribosomal subunit protein uL14c (121 aa).

It belongs to the universal ribosomal protein uL14 family. As to quaternary structure, part of the 50S ribosomal subunit.

Its subcellular location is the plastid. The protein localises to the apicoplast. In terms of biological role, binds to 23S rRNA. This is Large ribosomal subunit protein uL14c (rpl14) from Toxoplasma gondii.